Here is a 499-residue protein sequence, read N- to C-terminus: 6-hydroxynicotinate reductase (499 aa).

2 4Fe-4S ferredoxin-type domains span residues 1–29 (MFKI…YEKK) and 31–61 (KGAI…NDAP). Residues Cys-9, Cys-12, Cys-15, Cys-19, Cys-41, Cys-44, Cys-47, and Cys-51 each coordinate [4Fe-4S] cluster.

Homotetramer. An oxidized flavin is required as a cofactor. Requires [2Fe-2S] cluster as cofactor. The cofactor is [4Fe-4S] cluster.

The catalysed reaction is 1,4,5,6-tetrahydro-6-oxonicotinate + oxidized 2[4Fe-4S]-[ferredoxin] = 6-hydroxynicotinate + reduced 2[4Fe-4S]-[ferredoxin] + 2 H(+). It participates in cofactor degradation; nicotinate degradation; propanoate and pyruvate from 6-hydroxynicotinate: step 1/8. Catalyzes the reversible reduction of 6-hydroxynicotinate to 6-oxo-1,4,5,6-tetrahydronicotinate. The chain is 6-hydroxynicotinate reductase from Eubacterium barkeri (Clostridium barkeri).